The following is a 770-amino-acid chain: Proton-coupled zinc antiporter SLC30A5 (770 aa).

Residues 1–29 (MEEKYSSQALAGGGVLGPVDVPSARLTRY) are Cytoplasmic-facing. Residues 30–50 (IVLLCFAKFLKAVGLFESYDL) form a helical membrane-spanning segment. The Lumenal portion of the chain corresponds to 51–53 (LKA). Residues 54–74 (VHLVQFIFIVKLGSAFFMVLF) form a helical membrane-spanning segment. Residues 75 to 95 (QKPFSSGKVVTKHQWIKIFKH) are Cytoplasmic-facing. Residues 96-116 (AVVGCIISLLWFFGLTLCGPL) traverse the membrane as a helical segment. Position 117 (arginine 117) is a topological domain, lumenal. Residues 118 to 138 (TLLLFEHSDVVVLSLLSVLFT) traverse the membrane as a helical segment. Over 139–149 (SSGGGPAKTRG) the chain is Cytoplasmic. Residues 150 to 170 (AAFFIIAVICLLLFDNDDLMA) form a helical membrane-spanning segment. Residues 171-190 (KIAEHPEGHHDSALTHVLYT) are Lumenal-facing. The chain crosses the membrane as a helical span at residues 191–211 (VIAFLGVADHKGGVLLLVLAL). Over 212–235 (CCKVGFHMASRKLSVDVGGAKRLQ) the chain is Cytoplasmic. The chain crosses the membrane as a helical span at residues 236–256 (ALSHLVSVLLLCPWVIVLSLT). At 257–264 (TESKVESW) the chain is on the lumenal side. Residues 265-285 (SSLIMPFITVIFFVVILDFYV) traverse the membrane as a helical segment. Topologically, residues 286-300 (ESICSVKMESSKCAR) are cytoplasmic. Residues 301 to 321 (YGSFLIFISALLFGNFWTHPI) traverse the membrane as a helical segment. Over 322 to 339 (TDQLRAMNKPAHHESTEH) the chain is Lumenal. A helical membrane pass occupies residues 340-360 (VLSGGVVVSAVFFILSANILS). The Cytoplasmic portion of the chain corresponds to 361–415 (SPSRKGQKGTLIGYSPEGTPLYNFMGDAIQQSSQSLPRFIKESLKQILEEYDSRQ). The chain crosses the membrane as a helical span at residues 416 to 436 (IFYFLCLNLAFTFVELFYGVW). Topologically, residues 437-445 (TNSLGLISD) are lumenal. A helical membrane pass occupies residues 446–466 (GFHMLFDCSALVMGLFAALMT). Residues histidine 448 and aspartate 452 each contribute to the Zn(2+) site. Residues 467–480 (RWKATRIFSYGYGR) lie on the Cytoplasmic side of the membrane. A helical membrane pass occupies residues 481–501 (VEILSGFINGLFLMVIAFFVF). Residues 502 to 517 (MESVARLVDPPDIDTN) lie on the Lumenal side of the membrane. A helical membrane pass occupies residues 518 to 538 (MLTPVSVGGLIVNLVGICAFS). The segment at 539–579 (HAHSHGASRGGCHSHEHSHSYHGHSHSHGHGHSHNDHGHSH) is his-rich loop; required for zinc transport. At 539–597 (HAHSHGASRGGCHSHEHSHSYHGHSHSHGHGHSHNDHGHSHGHSHVSSGGGMNTNMRGV) the chain is on the cytoplasmic side. A disordered region spans residues 548-586 (GGCHSHEHSHSYHGHSHSHGHGHSHNDHGHSHGHSHVSS). Residues 558 to 570 (SYHGHSHSHGHGH) show a composition bias toward basic residues. Residues 598–618 (FLHVLADTLGSVGVIVSTTFI) traverse the membrane as a helical segment. Positions 600 and 604 each coordinate Zn(2+). The Lumenal segment spans residues 619-622 (QQFG). A helical membrane pass occupies residues 623 to 643 (WLIADPLCSLFIATLIFLSVI). Over 644–770 (PLLKDACQVL…KYYKDGTYIM (127 aa)) the chain is Cytoplasmic.

Belongs to the cation diffusion facilitator (CDF) transporter (TC 2.A.4) family. SLC30A subfamily. Heterodimer with SLC30A6/ZNT6; form a functional zinc ion transmembrane transporter.

The protein localises to the golgi apparatus. It localises to the golgi stack membrane. It is found in the cytoplasmic vesicle. Its subcellular location is the COPII-coated vesicle membrane. The protein resides in the secretory vesicle membrane. The protein localises to the trans-Golgi network membrane. The catalysed reaction is Zn(2+)(in) + 2 H(+)(out) = Zn(2+)(out) + 2 H(+)(in). In terms of biological role, together with SLC30A6 forms a functional proton-coupled zinc ion antiporter mediating zinc entry into the lumen of organelles along the secretory pathway. By contributing to zinc ion homeostasis within the early secretory pathway, regulates the activation and folding of enzymes like alkaline phosphatases and enzymes involved in phosphatidylinositol glycan anchor biosynthesis. This is Proton-coupled zinc antiporter SLC30A5 from Gallus gallus (Chicken).